A 1358-amino-acid polypeptide reads, in one-letter code: Phosphoinositide 3-kinase regulatory subunit 4 (1358 aa).

Gly2 is lipidated: N-myristoyl glycine. The 299-residue stretch at 26–324 (FEYDKSLGST…AFPEIFYTFL (299 aa)) folds into the Protein kinase domain. Residues 32 to 40 (LGSTRFFKV) and Lys53 each bind ATP. The active-site Proton acceptor is Asp148. HEAT repeat units lie at residues 413 to 450 (ILLD…LVQE), 458 to 495 (IYPE…TALR), 572 to 610 (KAND…YVGW), and 612 to 648 (SSSI…LGLL). 4 positions are modified to phosphoserine: Ser808, Ser813, Ser853, and Ser865. 6 WD repeats span residues 991–1030 (EHKS…GKTT), 1040–1079 (RIGG…LPKS), 1093–1134 (KEDG…NAWT), 1139–1178 (LKSG…PISS), 1182–1223 (PSRA…RRLT), and 1237–1278 (PSPH…RSYV). The tract at residues 1307-1326 (KQKVGPSDDTPRRGPESLPV) is disordered. Residues 1315–1326 (DTPRRGPESLPV) show a composition bias toward basic and acidic residues. Phosphothreonine is present on Thr1316. Residues 1327 to 1358 (GHHDIITDIATFQTTQGFIVTASRDGIVKVWK) form a WD 7 repeat.

The protein belongs to the protein kinase superfamily. Ser/Thr protein kinase family. In terms of assembly, component of the PI3K (PI3KC3/PI3K-III/class III phosphatidylinositol 3-kinase) complex the core of which is composed of the catalytic subunit PIK3C3, the regulatory subunit PIK3R4 and BECN1 associating with additional regulatory/auxiliary subunits to form alternative complex forms. Alternative complex forms containing a fourth regulatory subunit in a mutually exclusive manner are PI3K complex I (PI3KC3-C1) containing ATG14, and PI3K complex II (PI3KC3-C2) containing UVRAG. PI3KC3-C1 displays a V-shaped architecture with PIK3R4 serving as a bridge between PIK3C3 and the ATG14:BECN1 subcomplex. Both, PI3KC3-C1 and PI3KC3-C2, can associate with further regulatory subunits, such as RUBCN, SH3GLB1/Bif-1, AMBRA1 and NRBF2. PI3KC3-C1 probably associates with PIK3CB. Interacts with RAB7A in the presence of PIK3C3/VPS34. Interacts with NRBF2. Interacts with ARMC3. It depends on Mn(2+) as a cofactor. Myristoylated. In terms of processing, probably autophosphorylated.

It localises to the late endosome. Its subcellular location is the cytoplasmic vesicle. The protein resides in the autophagosome. It is found in the membrane. The catalysed reaction is L-seryl-[protein] + ATP = O-phospho-L-seryl-[protein] + ADP + H(+). It carries out the reaction L-threonyl-[protein] + ATP = O-phospho-L-threonyl-[protein] + ADP + H(+). Its function is as follows. Regulatory subunit of the PI3K complex that mediates formation of phosphatidylinositol 3-phosphate; different complex forms are believed to play a role in multiple membrane trafficking pathways: PI3KC3-C1 is involved in initiation of autophagosomes and PI3KC3-C2 in maturation of autophagosomes and endocytosis. Involved in regulation of degradative endocytic trafficking and cytokinesis, probably in the context of PI3KC3-C2. The chain is Phosphoinositide 3-kinase regulatory subunit 4 (Pik3r4) from Mus musculus (Mouse).